Reading from the N-terminus, the 398-residue chain is Mitogen-activated protein kinase 1 (398 aa).

Residues 1–26 (MDAGAQPPDTEMAEAGGGQQPPAAAA) are disordered. One can recognise a Protein kinase domain in the interval 67 to 352 (KPPILPIGKG…VEGALAHPYL (286 aa)). Residues 73-81 (IGKGAYGIV) and Lys96 each bind ATP. Asp193 functions as the Proton acceptor in the catalytic mechanism. A Phosphothreonine modification is found at Thr225. The short motif at 225-227 (TEY) is the TXY element. Tyr227 is modified (phosphotyrosine).

It belongs to the protein kinase superfamily. CMGC Ser/Thr protein kinase family. MAP kinase subfamily. As to quaternary structure, may interact with RAC1. Post-translationally, dually phosphorylated on Thr-225 and Tyr-227, which activates the enzyme.

It carries out the reaction L-seryl-[protein] + ATP = O-phospho-L-seryl-[protein] + ADP + H(+). It catalyses the reaction L-threonyl-[protein] + ATP = O-phospho-L-threonyl-[protein] + ADP + H(+). With respect to regulation, activated by threonine and tyrosine phosphorylation. Activated in response to sphingolipid elicitor (SE). Its function is as follows. Involved in sphingolipid elicitor (SE)-dependent defense signaling pathway. Acts downstream of heterotrimeric G protein alpha subunit and small GTPase RAC1. May regulate the expression of various genes involved in biotic and abiotic stress response. Involved in an abscisic acid signaling pathway that regulates the activities of antioxidant enzymes and the production of hydrogen peroxide. Acts downstream of CCAMK. The sequence is that of Mitogen-activated protein kinase 1 (MPK1) from Oryza sativa subsp. japonica (Rice).